Reading from the N-terminus, the 121-residue chain is Large ribosomal subunit protein bL12 (121 aa).

It belongs to the bacterial ribosomal protein bL12 family. In terms of assembly, homodimer. Part of the ribosomal stalk of the 50S ribosomal subunit. Forms a multimeric L10(L12)X complex, where L10 forms an elongated spine to which 2 to 4 L12 dimers bind in a sequential fashion. Binds GTP-bound translation factors.

Its function is as follows. Forms part of the ribosomal stalk which helps the ribosome interact with GTP-bound translation factors. Is thus essential for accurate translation. This chain is Large ribosomal subunit protein bL12, found in Tremblaya princeps.